The primary structure comprises 207 residues: Guanylate kinase (207 aa).

The Guanylate kinase-like domain occupies 5–184 (GNLFIVSAPS…ALADLVAIIR (180 aa)). Position 12-19 (12-19 (APSGAGKS)) interacts with ATP.

Belongs to the guanylate kinase family.

It localises to the cytoplasm. It catalyses the reaction GMP + ATP = GDP + ADP. In terms of biological role, essential for recycling GMP and indirectly, cGMP. This chain is Guanylate kinase, found in Shewanella violacea (strain JCM 10179 / CIP 106290 / LMG 19151 / DSS12).